The following is a 136-amino-acid chain: Histone H3.2 (136 aa).

The segment at 1–45 (MARTKQTARKSTGGKAPRKQLATKAARKSAPATGGVKKPHRYRPG) is disordered. Arginine 3 carries the post-translational modification Asymmetric dimethylarginine; by PRMT6; alternate. Arginine 3 carries the citrulline; alternate modification. The residue at position 4 (threonine 4) is a Phosphothreonine; by HASPIN and VRK1. Lysine 5 carries the allysine; alternate modification. Lysine 5 carries the N6,N6,N6-trimethyllysine; alternate modification. An N6,N6-dimethyllysine; alternate modification is found at lysine 5. Position 5 is an N6-(2-hydroxyisobutyryl)lysine; alternate (lysine 5). Lysine 5 is subject to N6-(beta-hydroxybutyryl)lysine; alternate. Lysine 5 carries the post-translational modification N6-acetyllysine; alternate. Position 5 is an N6-crotonyllysine; alternate (lysine 5). Lysine 5 bears the N6-methyllysine; alternate mark. 5-glutamyl dopamine; alternate is present on glutamine 6. Glutamine 6 is modified (5-glutamyl serotonin; alternate). At threonine 7 the chain carries Phosphothreonine; by PKC. Arginine 9 carries the citrulline; alternate modification. Residue arginine 9 is modified to Symmetric dimethylarginine; by PRMT5; alternate. Position 10 is an N6,N6,N6-trimethyllysine; alternate (lysine 10). N6,N6-dimethyllysine; alternate is present on lysine 10. Lysine 10 is modified (N6-(2-hydroxyisobutyryl)lysine; alternate). Lysine 10 carries the N6-(beta-hydroxybutyryl)lysine; alternate modification. Lysine 10 is modified (N6-acetyllysine; alternate). The residue at position 10 (lysine 10) is an N6-crotonyllysine; alternate. The residue at position 10 (lysine 10) is an N6-methyllysine; alternate. Lysine 10 is modified (N6-lactoyllysine; alternate). Serine 11 carries the post-translational modification ADP-ribosylserine; alternate. Residue serine 11 is modified to Phosphoserine; alternate; by AURKB, AURKC, RPS6KA3, RPS6KA4 and RPS6KA5. At threonine 12 the chain carries Phosphothreonine; by PKC. Lysine 15 bears the N6-(2-hydroxyisobutyryl)lysine; alternate mark. At lysine 15 the chain carries N6-(beta-hydroxybutyryl)lysine; alternate. The residue at position 15 (lysine 15) is an N6-acetyllysine; alternate. Lysine 15 is subject to N6-lactoyllysine; alternate. N6-glutaryllysine; alternate is present on lysine 15. Lysine 15 is modified (N6-succinyllysine; alternate). Arginine 18 is subject to Citrulline; alternate. Arginine 18 is subject to Asymmetric dimethylarginine; by CARM1; alternate. Residues lysine 19 and lysine 24 each carry the N6-(2-hydroxyisobutyryl)lysine; alternate modification. Residues lysine 19 and lysine 24 each carry the N6-(beta-hydroxybutyryl)lysine; alternate modification. An N6-acetyllysine; alternate mark is found at lysine 19 and lysine 24. An N6-crotonyllysine; alternate mark is found at lysine 19 and lysine 24. N6-methyllysine; alternate occurs at positions 19 and 24. N6-lactoyllysine; alternate occurs at positions 19 and 24. An N6-glutaryllysine; alternate mark is found at lysine 19 and lysine 24. An N6-butyryllysine; alternate mark is found at lysine 19 and lysine 24. A lipid anchor (N6-decanoyllysine) is attached at lysine 19. Arginine 27 carries the post-translational modification Citrulline. The residue at position 28 (lysine 28) is an N6,N6,N6-trimethyllysine; alternate. Lysine 28 bears the N6,N6-dimethyllysine; alternate mark. An N6-(2-hydroxyisobutyryl)lysine; alternate modification is found at lysine 28. At lysine 28 the chain carries N6-acetyllysine; alternate. At lysine 28 the chain carries N6-crotonyllysine; alternate. The residue at position 28 (lysine 28) is an N6-methyllysine; alternate. An N6-lactoyllysine; alternate modification is found at lysine 28. Position 28 is an N6-glutaryllysine; alternate (lysine 28). An ADP-ribosylserine; alternate modification is found at serine 29. Serine 29 is modified (phosphoserine; alternate; by AURKB, AURKC and RPS6KA5). N6,N6,N6-trimethyllysine; alternate is present on lysine 37. Lysine 37 carries the post-translational modification N6,N6-dimethyllysine; alternate. Residue lysine 37 is modified to N6-(2-hydroxyisobutyryl)lysine; alternate. At lysine 37 the chain carries N6-acetyllysine; alternate. Lysine 37 is modified (N6-methyllysine; alternate). Lysine 38 bears the N6-methyllysine mark. The residue at position 42 (tyrosine 42) is a Phosphotyrosine. Lysine 57 bears the N6,N6,N6-trimethyllysine; alternate mark. Lysine 57 is modified (N6-(2-hydroxyisobutyryl)lysine; alternate). Lysine 57 is modified (N6-(beta-hydroxybutyryl)lysine; alternate). At lysine 57 the chain carries N6-acetyllysine; alternate. Residue lysine 57 is modified to N6-crotonyllysine; alternate. Position 57 is an N6-lactoyllysine; alternate (lysine 57). Position 57 is an N6-glutaryllysine; alternate (lysine 57). Lysine 57 carries the N6-succinyllysine; alternate modification. Lysine 57 bears the N6-methyllysine; by EHMT2; alternate mark. Serine 58 is subject to Phosphoserine. N6-(2-hydroxyisobutyryl)lysine; alternate is present on residues lysine 65 and lysine 80. An N6-methyllysine; alternate mark is found at lysine 65 and lysine 80. An N6,N6,N6-trimethyllysine; alternate modification is found at lysine 80. Lysine 80 carries the N6,N6-dimethyllysine; alternate modification. Lysine 80 carries the N6-acetyllysine; alternate modification. Lysine 80 is modified (N6-lactoyllysine; alternate). Lysine 80 bears the N6-glutaryllysine; alternate mark. At lysine 80 the chain carries N6-succinyllysine; alternate. Threonine 81 is modified (phosphothreonine). Serine 87 carries the phosphoserine modification. A Phosphothreonine modification is found at threonine 108. A lipid anchor (S-palmitoyl cysteine) is attached at cysteine 111. 2 positions are modified to N6-acetyllysine; alternate: lysine 116 and lysine 123. An N6-glutaryllysine; alternate mark is found at lysine 116 and lysine 123. Position 123 is an N6-(2-hydroxyisobutyryl)lysine; alternate (lysine 123). Lysine 123 carries the post-translational modification N6-methyllysine; alternate. N6-succinyllysine; alternate is present on lysine 123.

This sequence belongs to the histone H3 family. The nucleosome is a histone octamer containing two molecules each of H2A, H2B, H3 and H4 assembled in one H3-H4 heterotetramer and two H2A-H2B heterodimers. The octamer wraps approximately 147 bp of DNA. During nucleosome assembly the chaperone ASF1A interacts with the histone H3-H4 heterodimer (via C-terminus of H3); this interaction is direct. Interacts with DNAJC9, CHAF1A and CHAF1B. Interacts with NASP; NASP is a histone chaperone that stabilizes and maintains a soluble pool of Histone H3-H4 dimers. Post-translationally, acetylation is generally linked to gene activation. Acetylation on Lys-10 (H3K9ac) impairs methylation at Arg-9 (H3R8me2s). Acetylation on Lys-19 (H3K18ac) and Lys-24 (H3K24ac) favors methylation at Arg-18 (H3R17me). Acetylation at Lys-123 (H3K122ac) by EP300/p300 plays a central role in chromatin structure: localizes at the surface of the histone octamer and stimulates transcription, possibly by promoting nucleosome instability. Citrullination at Arg-9 (H3R8ci) and/or Arg-18 (H3R17ci) by PADI4 impairs methylation and represses transcription. In terms of processing, asymmetric dimethylation at Arg-18 (H3R17me2a) by CARM1 is linked to gene activation. Symmetric dimethylation at Arg-9 (H3R8me2s) by PRMT5 is linked to gene repression. Asymmetric dimethylation at Arg-3 (H3R2me2a) by PRMT6 is linked to gene repression and is mutually exclusive with H3 Lys-5 methylation (H3K4me2 and H3K4me3). H3R2me2a is present at the 3' of genes regardless of their transcription state and is enriched on inactive promoters, while it is absent on active promoters. Post-translationally, methylation at Lys-5 (H3K4me), Lys-37 (H3K36me) and Lys-80 (H3K79me) are linked to gene activation. Methylation at Lys-5 (H3K4me) facilitates subsequent acetylation of H3 and H4. Methylation at Lys-80 (H3K79me) is associated with DNA double-strand break (DSB) responses and is a specific target for TP53BP1. Methylation at Lys-10 (H3K9me) and Lys-28 (H3K27me) are linked to gene repression. Methylation at Lys-10 (H3K9me) is a specific target for HP1 proteins (CBX1, CBX3 and CBX5) and prevents subsequent phosphorylation at Ser-11 (H3S10ph) and acetylation of H3 and H4. Methylation at Lys-5 (H3K4me) and Lys-80 (H3K79me) require preliminary monoubiquitination of H2B at 'Lys-120'. Methylation at Lys-10 (H3K9me) and Lys-28 (H3K27me) are enriched in inactive X chromosome chromatin. Monomethylation at Lys-57 (H3K56me1) by EHMT2/G9A in G1 phase promotes interaction with PCNA and is required for DNA replication. Phosphorylated at Thr-4 (H3T3ph) by VRK1. Phosphorylated at Thr-4 (H3T3ph) by HASPIN during prophase and dephosphorylated during anaphase. Phosphorylation at Ser-11 (H3S10ph) by AURKB is crucial for chromosome condensation and cell-cycle progression during mitosis and meiosis. In addition phosphorylation at Ser-11 (H3S10ph) by RPS6KA4 and RPS6KA5 is important during interphase because it enables the transcription of genes following external stimulation, like mitogens, stress, growth factors or UV irradiation and result in the activation of genes, such as c-fos and c-jun. Phosphorylation at Ser-11 (H3S10ph), which is linked to gene activation, prevents methylation at Lys-10 (H3K9me) but facilitates acetylation of H3 and H4. Phosphorylation at Ser-11 (H3S10ph) by AURKB mediates the dissociation of HP1 proteins (CBX1, CBX3 and CBX5) from heterochromatin. Phosphorylation at Ser-11 (H3S10ph) is also an essential regulatory mechanism for neoplastic cell transformation. Phosphorylated at Ser-29 (H3S28ph) by MAP3K20 isoform 1, RPS6KA5 or AURKB during mitosis or upon ultraviolet B irradiation. Phosphorylation at Thr-7 (H3T6ph) by PRKCB is a specific tag for epigenetic transcriptional activation that prevents demethylation of Lys-5 (H3K4me) by LSD1/KDM1A. At centromeres, specifically phosphorylated at Thr-12 (H3T11ph) from prophase to early anaphase, by DAPK3 and PKN1. Phosphorylation at Thr-12 (H3T11ph) by PKN1 or isoform M2 of PKM (PKM2) is a specific tag for epigenetic transcriptional activation that promotes demethylation of Lys-10 (H3K9me) by KDM4C/JMJD2C. Phosphorylation at Tyr-42 (H3Y41ph) by JAK2 promotes exclusion of CBX5 (HP1 alpha) from chromatin. In terms of processing, monoubiquitinated by RAG1 in lymphoid cells, monoubiquitination is required for V(D)J recombination. Ubiquitinated by the CUL4-DDB-RBX1 complex in response to ultraviolet irradiation. This may weaken the interaction between histones and DNA and facilitate DNA accessibility to repair proteins. Post-translationally, lysine deamination at Lys-5 (H3K4all) to form allysine is mediated by LOXL2. Allysine formation by LOXL2 only takes place on H3K4me3 and results in gene repression. Crotonylation (Kcr) is specifically present in male germ cells and marks testis-specific genes in post-meiotic cells, including X-linked genes that escape sex chromosome inactivation in haploid cells. Crotonylation marks active promoters and enhancers and confers resistance to transcriptional repressors. It is also associated with post-meiotically activated genes on autosomes. In terms of processing, butyrylation of histones marks active promoters and competes with histone acetylation. It is present during late spermatogenesis. Post-translationally, succinylation at Lys-80 (H3K79succ) by KAT2A takes place with a maximum frequency around the transcription start sites of genes. It gives a specific tag for epigenetic transcription activation. Desuccinylation at Lys-123 (H3K122succ) by SIRT7 in response to DNA damage promotes chromatin condensation and double-strand breaks (DSBs) repair. Serine ADP-ribosylation by PARP1 or PARP2 constitutes the primary form of ADP-ribosylation of proteins in response to DNA damage. Serine ADP-ribosylation at Ser-11 (H3S10ADPr) promotes recruitment of CHD1L. H3S10ADPr is mutually exclusive with phosphorylation at Ser-11 (H3S10ph) and impairs acetylation at Lys-10 (H3K9ac). In terms of processing, serotonylated by TGM2 at Gln-6 (H3Q5ser) during serotonergic neuron differentiation. H3Q5ser is associated with trimethylation of Lys-5 (H3K4me3) and enhances general transcription factor IID (TFIID) complex-binding to H3K4me3, thereby facilitating transcription. Post-translationally, dopaminylated by TGM2 at Gln-6 (H3Q5dop) in ventral tegmental area (VTA) neurons. H3Q5dop mediates neurotransmission-independent role of nuclear dopamine by regulating relapse-related transcriptional plasticity in the reward system. Lactylated in macrophages by EP300/P300 by using lactoyl-CoA directly derived from endogenous or exogenous lactate, leading to stimulates gene transcription.

Its subcellular location is the nucleus. It is found in the chromosome. In terms of biological role, core component of nucleosome. Nucleosomes wrap and compact DNA into chromatin, limiting DNA accessibility to the cellular machineries which require DNA as a template. Histones thereby play a central role in transcription regulation, DNA repair, DNA replication and chromosomal stability. DNA accessibility is regulated via a complex set of post-translational modifications of histones, also called histone code, and nucleosome remodeling. This is Histone H3.2 from Cricetulus longicaudatus (Long-tailed dwarf hamster).